Reading from the N-terminus, the 94-residue chain is Pyrimidine/purine nucleoside phosphorylase (94 aa).

The protein belongs to the nucleoside phosphorylase PpnP family.

The enzyme catalyses a purine D-ribonucleoside + phosphate = a purine nucleobase + alpha-D-ribose 1-phosphate. It carries out the reaction adenosine + phosphate = alpha-D-ribose 1-phosphate + adenine. It catalyses the reaction cytidine + phosphate = cytosine + alpha-D-ribose 1-phosphate. The catalysed reaction is guanosine + phosphate = alpha-D-ribose 1-phosphate + guanine. The enzyme catalyses inosine + phosphate = alpha-D-ribose 1-phosphate + hypoxanthine. It carries out the reaction thymidine + phosphate = 2-deoxy-alpha-D-ribose 1-phosphate + thymine. It catalyses the reaction uridine + phosphate = alpha-D-ribose 1-phosphate + uracil. The catalysed reaction is xanthosine + phosphate = alpha-D-ribose 1-phosphate + xanthine. Functionally, catalyzes the phosphorolysis of diverse nucleosides, yielding D-ribose 1-phosphate and the respective free bases. Can use uridine, adenosine, guanosine, cytidine, thymidine, inosine and xanthosine as substrates. Also catalyzes the reverse reactions. The polypeptide is Pyrimidine/purine nucleoside phosphorylase (Pseudomonas putida (strain GB-1)).